The sequence spans 78 residues: U-scoloptoxin(04)-Er1a (78 aa).

Residues 1–24 (MTRHLIFAAVLLVCLFVCWNAIGA) form the signal peptide. A propeptide spanning residues 25 to 28 (QDAR) is cleaved from the precursor.

This sequence belongs to the scoloptoxin-04 family. Post-translationally, contains 2 disulfide bonds. Expressed by the venom gland.

It is found in the secreted. The polypeptide is U-scoloptoxin(04)-Er1a (Ethmostigmus rubripes (Giant centipede)).